The following is a 366-amino-acid chain: Chorismate synthase (366 aa).

Residues Arg-48 and Arg-54 each coordinate NADP(+). FMN is bound by residues 125-127 (RSS), 238-239 (NA), Gly-278, 293-297 (KPTSS), and Arg-319.

The protein belongs to the chorismate synthase family. Homotetramer. Requires FMNH2 as cofactor.

The catalysed reaction is 5-O-(1-carboxyvinyl)-3-phosphoshikimate = chorismate + phosphate. The protein operates within metabolic intermediate biosynthesis; chorismate biosynthesis; chorismate from D-erythrose 4-phosphate and phosphoenolpyruvate: step 7/7. Functionally, catalyzes the anti-1,4-elimination of the C-3 phosphate and the C-6 proR hydrogen from 5-enolpyruvylshikimate-3-phosphate (EPSP) to yield chorismate, which is the branch point compound that serves as the starting substrate for the three terminal pathways of aromatic amino acid biosynthesis. This reaction introduces a second double bond into the aromatic ring system. The polypeptide is Chorismate synthase (Cellvibrio japonicus (strain Ueda107) (Pseudomonas fluorescens subsp. cellulosa)).